We begin with the raw amino-acid sequence, 111 residues long: Large ribosomal subunit protein eL34B (111 aa).

Tyr-76 is subject to Phosphotyrosine.

This sequence belongs to the eukaryotic ribosomal protein eL34 family. As to quaternary structure, component of the large ribosomal subunit (LSU). Mature yeast ribosomes consist of a small (40S) and a large (60S) subunit. The 40S small subunit contains 1 molecule of ribosomal RNA (18S rRNA) and at least 33 different proteins. The large 60S subunit contains 3 rRNA molecules (25S, 5.8S and 5S rRNA) and at least 46 different proteins.

It localises to the cytoplasm. The protein resides in the nucleus. The protein localises to the nucleolus. Component of the ribosome, a large ribonucleoprotein complex responsible for the synthesis of proteins in the cell. The small ribosomal subunit (SSU) binds messenger RNAs (mRNAs) and translates the encoded message by selecting cognate aminoacyl-transfer RNA (tRNA) molecules. The large subunit (LSU) contains the ribosomal catalytic site termed the peptidyl transferase center (PTC), which catalyzes the formation of peptide bonds, thereby polymerizing the amino acids delivered by tRNAs into a polypeptide chain. The nascent polypeptides leave the ribosome through a tunnel in the LSU and interact with protein factors that function in enzymatic processing, targeting, and the membrane insertion of nascent chains at the exit of the ribosomal tunnel. The sequence is that of Large ribosomal subunit protein eL34B (rpl3402) from Schizosaccharomyces pombe (strain 972 / ATCC 24843) (Fission yeast).